The chain runs to 206 residues: Dephospho-CoA kinase (206 aa).

Residues 4-200 enclose the DPCK domain; that stretch reads IVALTGGIGS…AHYLQLASQF (197 aa). Position 12–17 (12–17) interacts with ATP; it reads GSGKST.

It belongs to the CoaE family.

The protein resides in the cytoplasm. The catalysed reaction is 3'-dephospho-CoA + ATP = ADP + CoA + H(+). Its pathway is cofactor biosynthesis; coenzyme A biosynthesis; CoA from (R)-pantothenate: step 5/5. In terms of biological role, catalyzes the phosphorylation of the 3'-hydroxyl group of dephosphocoenzyme A to form coenzyme A. The sequence is that of Dephospho-CoA kinase from Shigella flexneri.